Consider the following 577-residue polypeptide: MNNYQVKAIKEKTQQYLSKRKFEDALTFITKTIEQEPNPTIDLFELRAQVYEKSGQYSQAELDAKRMIHLNARNARGYLRLGKLLQLDGFDKKADQLYTQGLRMVHKMDPLRPVLKKVSQRLNERILRTRPVLDLFRILPREVLLCILQQLNFKSIVQCMQVCKHWRDCIKKEPSLFCCLDFSCASPRSVNSRDRNVMAVARYSVYSKDNIQEVIGLEKLGILTPTKALLRSVKSLKVYKTISPLHTQSTDKLYTIWTPFSELHYFYCATPITFSIASKILSCCKKLKQVELVDLIPDLIFDSMDWDKLFNAESVPLALKSLTFIRNQKFPFHHKEQQFLKDLLSASPYLEYLEASYQSDLVAAIKKYKINLRSLIIIDEGVSNTVKDLAFLPQSLTTLIVKPCNPASTILCPYLFPTNVRMESLINLELFLYLRLSQNDIDNVVKFLTSCYKLKKLVLHDSLALAPHFFEIFASLPELEHLEIPDNVALQNKHAIHITDCCPNLKYVNFSNSISLDGSGFIAVLRGLKELKRIDIINCDSVSRDAIDWARSKGMQVTVASSLPNSQPLGTKKIRLI.

3 TPR repeats span residues 6 to 39 (VKAI…EPNP), 41 to 74 (IDLF…NARN), and 76 to 108 (RGYL…VHKM). One can recognise an F-box domain in the interval 138–180 (ILPREVLLCILQQLNFKSIVQCMQVCKHWRDCIKKEPSLFCCL).

In terms of assembly, a part of the E3 ubiquitin ligase Skp1-Cullin-1-F-box (SCF) complex. Interacts with cul1, mcl1 and skp1.

The protein resides in the mitochondrion. It is found in the nucleus. In terms of biological role, has a role in substrate recognition in the Skp1-Cullin-1/Cdc53-F-box (SCF) ubiquitin ligase complex. Required for the maintenance of telomere length and transcriptional silencing at the telomere. Also required for chromosome segregation. This is F-box/TPR repeat protein pof3 (pof3) from Schizosaccharomyces pombe (strain 972 / ATCC 24843) (Fission yeast).